Here is a 26-residue protein sequence, read N- to C-terminus: Nicotinic acetylcholine receptor-binding protein Mnn-1A (26 aa).

Residues Cys-3 and Cys-22 are joined by a disulfide bond.

The protein belongs to the three-finger toxin family. Short-chain subfamily. As to expression, expressed by the venom gland.

The protein localises to the secreted. Its function is as follows. Binds and may inhibit nicotinic acetylcholine receptors (nAChR). The chain is Nicotinic acetylcholine receptor-binding protein Mnn-1A from Micrurus nigrocinctus (Central American coral snake).